The chain runs to 512 residues: Ascofuranone/ascochlorin biosynthesis clusters transcription regulator (512 aa).

The zn(2)-C6 fungal-type DNA-binding region spans 14-49 (CDRCHSQKLRCPRSVEPEKANPEEPCSRCRKAGVPC). 3 disordered regions span residues 54-87 (RGKVGRPSKATKKKSARSPRATSTPEAEFPPYDI), 118-148 (GSGSVTTSASPKTMAEDYQPEGQRPFPDPLM), and 325-351 (GCTRSSSRASTTSKGSSMESDEGDGSI). Over residues 56–70 (KVGRPSKATKKKSAR) the composition is skewed to basic residues. Low complexity-rich tracts occupy residues 118-127 (GSGSVTTSAS) and 327-342 (TRSSSRASTTSKGSSM).

It is found in the nucleus. Functionally, transcription factor that regulates the expression of the asc-1 and asc-2 gene clusters that mediate the biosynthesis of both ascochlorin and ascofuranone, a strong inhibitor of cyanide-insensitive alternative oxidases and a promising drug candidate against African trypanosomiasis. Binds the 5'-CGGYGNNTTW-3' motif within promoters of the target genes. This is Ascofuranone/ascochlorin biosynthesis clusters transcription regulator from Acremonium egyptiacum (Oospora egyptiaca).